The chain runs to 100 residues: MQLTMREQEKMMISLAAMIAQRRKDKGIKLNHPEAVALITDYVLEGAREGKTVAQLMDEARNLLTREDVMEGIAEMIPMIQVEATFTDSTKLVTVHDPIQ.

Belongs to the urease gamma subunit family. In terms of assembly, heterotrimer of UreA (gamma), UreB (beta) and UreC (alpha) subunits. Three heterotrimers associate to form the active enzyme.

The protein resides in the cytoplasm. The catalysed reaction is urea + 2 H2O + H(+) = hydrogencarbonate + 2 NH4(+). It functions in the pathway nitrogen metabolism; urea degradation; CO(2) and NH(3) from urea (urease route): step 1/1. Functionally, ureolysis may allow urea to be employed as a nitrogen source for growth and produces ammonia which may protect from killing at low pH. The chain is Urease subunit gamma from Streptococcus salivarius (strain 57.I).